Reading from the N-terminus, the 251-residue chain is Ribonuclease PH (251 aa).

Residues arginine 87 and 125–127 (GTR) each bind phosphate.

It belongs to the RNase PH family. As to quaternary structure, homohexameric ring arranged as a trimer of dimers.

It catalyses the reaction tRNA(n+1) + phosphate = tRNA(n) + a ribonucleoside 5'-diphosphate. Its function is as follows. Phosphorolytic 3'-5' exoribonuclease that plays an important role in tRNA 3'-end maturation. Removes nucleotide residues following the 3'-CCA terminus of tRNAs; can also add nucleotides to the ends of RNA molecules by using nucleoside diphosphates as substrates, but this may not be physiologically important. Probably plays a role in initiation of 16S rRNA degradation (leading to ribosome degradation) during starvation. This chain is Ribonuclease PH, found in Saccharopolyspora erythraea (strain ATCC 11635 / DSM 40517 / JCM 4748 / NBRC 13426 / NCIMB 8594 / NRRL 2338).